The primary structure comprises 347 residues: MSVMFDPDTAIYPFPPKPTPLSIDEKAYYREKIKRLLKERNAVMVAHYYTDPEIQQLAEETGGCISDSLEMARFGAKHPASTLLVAGVRFMGETAKILSPEKTILMPTLQAECSLDLGCPVEEFNAFCDAHPDRTVVVYANTSAAVKARADWVVTSSIAVELIDHLDSLGEKIIWAPDTHLGRYVQKQTGADILCWQGACIVHDEFKTQALTRLQEEYPDAAILVHPESPQAIVEMADAVGSTSQLIAAAKTLQHQRLIVATDRGIFYKMQQAVPDKELLEAPTAGEGATCRSCAHCPWMAMNGLQAIAEALEQEGSNHEVYVDERLRERALVPLNRMLDFAATLRG.

Iminosuccinate is bound by residues His-47 and Ser-68. [4Fe-4S] cluster is bound at residue Cys-113. Residues 139–141 and Ser-156 contribute to the iminosuccinate site; that span reads YAN. Cys-200 serves as a coordination point for [4Fe-4S] cluster. Iminosuccinate-binding positions include 226–228 and Thr-243; that span reads HPE. Cys-297 is a binding site for [4Fe-4S] cluster.

This sequence belongs to the quinolinate synthase family. Type 1 subfamily. It depends on [4Fe-4S] cluster as a cofactor.

Its subcellular location is the cytoplasm. It carries out the reaction iminosuccinate + dihydroxyacetone phosphate = quinolinate + phosphate + 2 H2O + H(+). It participates in cofactor biosynthesis; NAD(+) biosynthesis; quinolinate from iminoaspartate: step 1/1. In terms of biological role, catalyzes the condensation of iminoaspartate with dihydroxyacetone phosphate to form quinolinate. In Escherichia coli O127:H6 (strain E2348/69 / EPEC), this protein is Quinolinate synthase.